We begin with the raw amino-acid sequence, 566 residues long: Oxygen-dependent choline dehydrogenase (566 aa).

7-36 (DYIICGAGSAGNVLATRLTEDPDVTVLLLE) is a binding site for FAD. The interval 180–202 (NGYQQEGFGPMDRTVTPKGRRAS) is disordered. Catalysis depends on His-474, which acts as the Proton acceptor.

It belongs to the GMC oxidoreductase family. Requires FAD as cofactor.

The catalysed reaction is choline + A = betaine aldehyde + AH2. It carries out the reaction betaine aldehyde + NAD(+) + H2O = glycine betaine + NADH + 2 H(+). The protein operates within amine and polyamine biosynthesis; betaine biosynthesis via choline pathway; betaine aldehyde from choline (cytochrome c reductase route): step 1/1. In terms of biological role, involved in the biosynthesis of the osmoprotectant glycine betaine. Catalyzes the oxidation of choline to betaine aldehyde and betaine aldehyde to glycine betaine at the same rate. The protein is Oxygen-dependent choline dehydrogenase of Burkholderia cenocepacia (strain HI2424).